The sequence spans 227 residues: PKHD-type hydroxylase BamMC406_5004 (227 aa).

Residues 80–179 (QVYPPLFNRY…RVASFFWVQS (100 aa)) form the Fe2OG dioxygenase domain. 3 residues coordinate Fe cation: His98, Asp100, and His160. Arg170 provides a ligand contact to 2-oxoglutarate.

Requires Fe(2+) as cofactor. L-ascorbate is required as a cofactor.

In Burkholderia ambifaria (strain MC40-6), this protein is PKHD-type hydroxylase BamMC406_5004.